Reading from the N-terminus, the 330-residue chain is tRNA (cytosine(38)-C(5))-methyltransferase (330 aa).

An SAM-dependent MTase C5-type domain is found at 7-330 (LRVLELYSGI…ISLLLEPLNF (324 aa)). Cys-81 is an active-site residue.

This sequence belongs to the class I-like SAM-binding methyltransferase superfamily. C5-methyltransferase family.

The protein resides in the cytoplasm. Its subcellular location is the nucleus. The catalysed reaction is cytidine(38) in tRNA + S-adenosyl-L-methionine = 5-methylcytidine(38) in tRNA + S-adenosyl-L-homocysteine + H(+). Functionally, specifically methylates cytosine 38 in the anticodon loop of tRNA(Asp). Can also methylate cytosine 38 in tRNA(Glu), albeit to a lower level, but not tRNA(Lys). Pmt1-dependent tRNA methylation is induced by nitrogen limitation and depends on the nutrient-sensing protein kinase sck2. Does not have DNA-methylation activity. This chain is tRNA (cytosine(38)-C(5))-methyltransferase (pmt1), found in Schizosaccharomyces pombe (strain 972 / ATCC 24843) (Fission yeast).